The primary structure comprises 174 residues: Probable NAD(P)H dehydrogenase subunit CRR3, chloroplastic (174 aa).

A chloroplast-targeting transit peptide spans 1–54; that stretch reads MAVLSTIYSITRASTPTMASLTNDSPSPLPSSSPSKLPSPTSPSKKPLKLRQVS. Residues 14-24 show a composition bias toward polar residues; the sequence is STPTMASLTND. Positions 14 to 71 are disordered; that stretch reads STPTMASLTNDSPSPLPSSSPSKLPSPTSPSKKPLKLRQVSKQMGSQNQQRRGNKPSI. Residues 30–45 show a composition bias toward low complexity; it reads PSSSPSKLPSPTSPSK. Over residues 53 to 64 the composition is skewed to polar residues; sequence VSKQMGSQNQQR. Residues 140 to 160 form a helical membrane-spanning segment; it reads FTIQWILPIWIMSLLVACGVI.

It is found in the plastid. The protein localises to the chloroplast thylakoid membrane. Its function is as follows. Probable subunit of the chloroplast NAD(P)H dehydrogenase (NDH) complex of the photosynthetic electron transport chain. Required for both formation and activity of NDH. May function in assembly or stabilization of the NDH complex. The polypeptide is Probable NAD(P)H dehydrogenase subunit CRR3, chloroplastic (Arabidopsis thaliana (Mouse-ear cress)).